The primary structure comprises 239 residues: Small ribosomal subunit protein eS1 (239 aa).

The segment at 1–24 is disordered; that stretch reads MAIQPPGSYPQGNKKGKAKKKSGQ.

The protein belongs to the eukaryotic ribosomal protein eS1 family. In terms of assembly, component of the small ribosomal subunit. Mature ribosomes consist of a small (40S) and a large (60S) subunit. The 40S subunit contains about 33 different proteins and 1 molecule of RNA (18S). The 60S subunit contains about 49 different proteins and 3 molecules of RNA (25S, 5.8S and 5S).

Its subcellular location is the cytoplasm. The chain is Small ribosomal subunit protein eS1 from Encephalitozoon cuniculi (strain GB-M1) (Microsporidian parasite).